Reading from the N-terminus, the 116-residue chain is Nucleoid-associated protein P9515_00191 (116 aa).

Positions 89–98 (STTTMKERMN) are enriched in basic and acidic residues. A disordered region spans residues 89 to 116 (STTTMKERMNDLTGGLNLNLPGLDNNDS). The span at 99–116 (DLTGGLNLNLPGLDNNDS) shows a compositional bias: low complexity.

This sequence belongs to the YbaB/EbfC family. As to quaternary structure, homodimer.

It is found in the cytoplasm. The protein resides in the nucleoid. In terms of biological role, binds to DNA and alters its conformation. May be involved in regulation of gene expression, nucleoid organization and DNA protection. The chain is Nucleoid-associated protein P9515_00191 from Prochlorococcus marinus (strain MIT 9515).